Consider the following 754-residue polypeptide: Glutathione biosynthesis bifunctional protein GshAB (754 aa).

Residues 1–332 (MTLNQLLQKL…QGHALNEKIA (332 aa)) are glutamate--cysteine ligase. One can recognise an ATP-grasp domain in the interval 488–746 (KKILADASFP…ITTKILDKLF (259 aa)). An ATP-binding site is contributed by 515-573 (PLIKDKQIVVKPKSTNFGLGISIFQEPASLDNYQKALEIAFAEDTSVLVEEFIPGTEYR). Mg(2+) contacts are provided by aspartate 695, glutamate 716, and asparagine 718. Residues aspartate 695, glutamate 716, and asparagine 718 each coordinate Mn(2+).

This sequence in the N-terminal section; belongs to the glutamate--cysteine ligase type 1 family. Type 2 subfamily. As to quaternary structure, monomer. Mg(2+) is required as a cofactor. Requires Mn(2+) as cofactor.

It carries out the reaction L-cysteine + L-glutamate + ATP = gamma-L-glutamyl-L-cysteine + ADP + phosphate + H(+). It catalyses the reaction gamma-L-glutamyl-L-cysteine + glycine + ATP = glutathione + ADP + phosphate + H(+). The protein operates within sulfur metabolism; glutathione biosynthesis; glutathione from L-cysteine and L-glutamate: step 1/2. Its pathway is sulfur metabolism; glutathione biosynthesis; glutathione from L-cysteine and L-glutamate: step 2/2. Synthesizes glutathione from L-glutamate and L-cysteine via gamma-L-glutamyl-L-cysteine. The protein is Glutathione biosynthesis bifunctional protein GshAB of Streptococcus thermophilus (strain ATCC BAA-250 / LMG 18311).